Consider the following 130-residue polypeptide: Small ribosomal subunit protein uS9 (130 aa).

Belongs to the universal ribosomal protein uS9 family.

The sequence is that of Small ribosomal subunit protein uS9 from Shewanella loihica (strain ATCC BAA-1088 / PV-4).